The primary structure comprises 550 residues: Efflux pump DEP3 (550 aa).

The interval 1 to 33 is disordered; sequence MSEQSTLAGPYTEKPGVESQNPTGDGKASFDET. 11 helical membrane-spanning segments follow: residues 44-64, 78-98, 109-129, 139-159, 172-192, 199-219, 242-262, 268-288, 319-339, 351-371, and 373-393; these read AIAY…NTIV, LELI…ILLW, WVYI…GAAP, VIAG…VSVL, STVV…AFAA, WGFY…MILF, AVIF…GGVV, GTII…IVLL, FLAS…FQFI, LLPL…LMPK, and GLIP…SALM. N-linked (GlcNAc...) asparagine glycosylation occurs at Asn399. 3 helical membrane-spanning segments follow: residues 410–430, 439–459, and 515–535; these read ILVG…VQSL, AVGA…AICG, and SIWA…WPLF.

Belongs to the major facilitator superfamily. TCR/Tet family.

It is found in the cell membrane. Its function is as follows. Efflux pump; part of the gene cluster that mediates the biosynthesis of depudecin, a highly oxidized eleven-carbon linear polyketide that acts as a histone deacetylase (HDAC) inhibitor and makes a small contribution to pathogenesis. Is presumed either to be responsible for exporting depudecin, to provide self-protection, or both. The protein is Efflux pump DEP3 of Fusarium langsethiae.